A 106-amino-acid chain; its full sequence is Cell division topological specificity factor (106 aa).

Belongs to the MinE family.

In terms of biological role, prevents the cell division inhibition by proteins MinC and MinD at internal division sites while permitting inhibition at polar sites. This ensures cell division at the proper site by restricting the formation of a division septum at the midpoint of the long axis of the cell. In Prochlorococcus marinus subsp. pastoris (strain CCMP1986 / NIES-2087 / MED4), this protein is Cell division topological specificity factor.